The following is a 76-amino-acid chain: UPF0291 protein GWCH70_1239 (76 aa).

Residues 54 to 76 (VIDPNGNDVTPKKLKESQKSRLH) are disordered. A compositionally biased stretch (basic and acidic residues) spans 63–76 (TPKKLKESQKSRLH).

It belongs to the UPF0291 family.

It localises to the cytoplasm. This is UPF0291 protein GWCH70_1239 from Geobacillus sp. (strain WCH70).